A 329-amino-acid chain; its full sequence is 3-isopropylmalate dehydrogenase (329 aa).

Residues R83, R93, R114, and D200 each coordinate substrate. Positions 200, 224, and 228 each coordinate Mg(2+). Position 257 to 269 (257 to 269) interacts with NAD(+); sequence GSAPQIAGKNIAN.

This sequence belongs to the isocitrate and isopropylmalate dehydrogenases family. In terms of assembly, homotetramer. Mg(2+) serves as cofactor. It depends on Mn(2+) as a cofactor.

It is found in the cytoplasm. The enzyme catalyses (2R,3S)-3-isopropylmalate + NAD(+) = 4-methyl-2-oxopentanoate + CO2 + NADH. Its pathway is amino-acid biosynthesis; L-leucine biosynthesis; L-leucine from 3-methyl-2-oxobutanoate: step 3/4. In terms of biological role, catalyzes the oxidation of 3-carboxy-2-hydroxy-4-methylpentanoate (3-isopropylmalate) to 3-carboxy-4-methyl-2-oxopentanoate. The product decarboxylates to 4-methyl-2 oxopentanoate. In Methanothermobacter thermautotrophicus (strain ATCC 29096 / DSM 1053 / JCM 10044 / NBRC 100330 / Delta H) (Methanobacterium thermoautotrophicum), this protein is 3-isopropylmalate dehydrogenase (leuB).